We begin with the raw amino-acid sequence, 483 residues long: tRNA-2-methylthio-N(6)-dimethylallyladenosine synthase (483 aa).

Residues 31–148 form the MTTase N-terminal domain; it reads KKLYIETQGC…LPQMLDQHQD (118 aa). Residues C40, C77, C111, C192, C196, and C199 each contribute to the [4Fe-4S] cluster site. The Radical SAM core domain maps to 178-410; sequence RVEGFKAFVS…QHWIKQSSIR (233 aa). The TRAM domain maps to 413–477; sequence DAMQGTIQRV…LNLVYGELLN (65 aa).

This sequence belongs to the methylthiotransferase family. MiaB subfamily. As to quaternary structure, monomer. The cofactor is [4Fe-4S] cluster.

It is found in the cytoplasm. It carries out the reaction N(6)-dimethylallyladenosine(37) in tRNA + (sulfur carrier)-SH + AH2 + 2 S-adenosyl-L-methionine = 2-methylsulfanyl-N(6)-dimethylallyladenosine(37) in tRNA + (sulfur carrier)-H + 5'-deoxyadenosine + L-methionine + A + S-adenosyl-L-homocysteine + 2 H(+). Catalyzes the methylthiolation of N6-(dimethylallyl)adenosine (i(6)A), leading to the formation of 2-methylthio-N6-(dimethylallyl)adenosine (ms(2)i(6)A) at position 37 in tRNAs that read codons beginning with uridine. This chain is tRNA-2-methylthio-N(6)-dimethylallyladenosine synthase, found in Acinetobacter baylyi (strain ATCC 33305 / BD413 / ADP1).